The following is a 1225-amino-acid chain: MKRFLHRVKWPLLLSSIAVSLGIVAVACAQPNSRTIENLFRPSSAFTDKNDGSINATLYKALENREGLTQYLTMRLAPVLRNFYEENVDDDIKRNLRTFNTDTDNSFVNQEQNLRNQYRGDYLVRLQTDILDNTGGNQANWKLRDVNNKIVDDFINKLFTKNFVEYVDKSVGVLSTPLKGLIENQSNWNNIKIQAKFVDKNKRLRINNDAVYAAIQDKLLDQFVTNENPNLVSRVVFTNETPNDGFDNYFNPDLIKSPTPSYQFQVFNKYNQQDNSIKGANGFHILASNLQSYVNTNNKTIDIPNKFSSDSGGKLLLKASDMFDTFDPSFSAAFIQGYLALQKKSKGAEQTEYTKLEKDKSIIENFFVENNSAKAAMKSASSSSQTTTVHKTDLAKIFKENETTKSTDVFKGEYQKKFSNATSTSNSDSSNNSAIVDLKELKKDNNSQPDLILARGKDGIHLMGVDGGGYYLSESGRDVNKQKQFLLFRALQTKYGLIDTNTTYDFKLFDEVKKHFDKNRVLFLFNALFKLVDSKESNFLSFPQFKKFSDSIITVKNELKDLVESQYQQIVFNEVATAENKVALKLAERNQPFIDNERNKQIWMNGLAAVLPYEQDSKTGHYNELGIYYKDIIDKVSSNTSNSNSNSNSSSSDPFSKKIIDKLKENKKKVEAAVKKHVDELKVSVIPSPQYSQIILVDTKLSSDPRNTSLALNLALNAVLSSDELQNTIRRDYFVNDDQFKQAIDLDKLTFKNWNSLNNENWNIFKYTYLFDLFQKQANPSIFGNGVNESSTDNKPKINGVLDSLYNSLNLEERLDSNDLINYYSYLYTVQWLLKDNLKNLKQNLQAKLSRTTNSFLVWSLASDKDRNNTASQAMSVSSSKSVLVKMANNVASQTNQDFTKQEQQNPNYVFGSSAYNWTNNKTPTVNSAANDISSLYYTKNNGSSSTSLTLMQKSAQQTNNQQRRFGFHGIVTNTSSNNLPDAVRNRLFTSFVSQSEKSSSNGGQAQLQSTQSSGSNETIYKGALFSFGSLTKLIETIDNIPTQAEFDALYNHLTSNLNINVTGVDRSKSLQEQKTNLKNFANSNFNNTQTVQLKQAQSKTNNSNFNDVFSRFEGYIGTNKTSNYSSYNFLQDNQIYHAVYAKQINLEDVSMLGSDSLNSTDSNNSKRLDLSLEEFLSTVALEALNPNNQTQAINALIANAKNGLVRVGDNRLFSAISSQWVRKF.

The signal sequence occupies residues Met1 to Ala27. Cys28 is lipidated: N-palmitoyl cysteine. Residue Cys28 is the site of S-diacylglycerol cysteine attachment. Positions Gln995–Ser1014 are disordered.

This sequence belongs to the MG307/MG309/MG338 family.

It localises to the cell membrane. This is an uncharacterized protein from Mycoplasma genitalium (strain ATCC 33530 / DSM 19775 / NCTC 10195 / G37) (Mycoplasmoides genitalium).